A 52-amino-acid polypeptide reads, in one-letter code: MPEQVNCQYDCHCSNCACENTCNCCAKPACACTNSASNECSCQTCKCQTCKC.

2 consecutive repeats follow at residues 43-47 and 48-52; these read QTCKC.

Belongs to the metallothionein superfamily. Type 10 family.

Functionally, the metallothioneins are involved in the cellular sequestration of toxic metal ions. This is Metallothionein-2 (MT-II) from Candida glabrata (strain ATCC 2001 / BCRC 20586 / JCM 3761 / NBRC 0622 / NRRL Y-65 / CBS 138) (Yeast).